The sequence spans 178 residues: Long polar fimbria protein A (178 aa).

A signal peptide spans 1-24; that stretch reads MEFLMKKVVFALSALAVVSTSAFA.

The protein belongs to the fimbrial protein family.

The protein localises to the fimbrium. This is Long polar fimbria protein A (lpfA) from Salmonella typhimurium (strain LT2 / SGSC1412 / ATCC 700720).